The following is a 1042-amino-acid chain: Probable inorganic carbon transporter subunit DabA (1042 aa).

Zn(2+)-binding residues include Cys462, Asp464, His721, and Cys736.

This sequence belongs to the inorganic carbon transporter (TC 9.A.2) DabA family. As to quaternary structure, forms a complex with DabB. It depends on Zn(2+) as a cofactor.

It is found in the cell inner membrane. In terms of biological role, part of an energy-coupled inorganic carbon pump. The polypeptide is Probable inorganic carbon transporter subunit DabA (Nitrosomonas eutropha (strain DSM 101675 / C91 / Nm57)).